A 225-amino-acid chain; its full sequence is Ribose-5-phosphate isomerase A (225 aa).

Residues 33 to 36, 84 to 87, and 96 to 99 contribute to the substrate site; these read TGST, DGAD, and KGGG. The active-site Proton acceptor is Glu105. Lys123 provides a ligand contact to substrate.

This sequence belongs to the ribose 5-phosphate isomerase family. As to quaternary structure, homodimer.

It carries out the reaction aldehydo-D-ribose 5-phosphate = D-ribulose 5-phosphate. It functions in the pathway carbohydrate degradation; pentose phosphate pathway; D-ribose 5-phosphate from D-ribulose 5-phosphate (non-oxidative stage): step 1/1. Its function is as follows. Catalyzes the reversible conversion of ribose-5-phosphate to ribulose 5-phosphate. The polypeptide is Ribose-5-phosphate isomerase A (Halobacterium salinarum (strain ATCC 29341 / DSM 671 / R1)).